Reading from the N-terminus, the 464-residue chain is Glycosyl hydrolase family 109 protein 1 (464 aa).

The first 16 residues, 1 to 16, serve as a signal peptide directing secretion; sequence MFKHLNALFIGLALFA. Residue C17 is the site of N-palmitoyl cysteine attachment. C17 carries the S-diacylglycerol cysteine lipid modification. Residues 63–64, D85, 134–137, 154–155, and N183 each bind NAD(+); these read MR, WKHH, and EV. Substrate is bound by residues Y212, R228, 240-243, and Y318; that span reads YATH. NAD(+) is bound at residue Y240.

This sequence belongs to the Gfo/Idh/MocA family. Glycosyl hydrolase 109 subfamily. NAD(+) serves as cofactor.

The protein resides in the cell membrane. In terms of biological role, glycosidase. Has no alpha-N-acetylgalactosaminidase activity. The sequence is that of Glycosyl hydrolase family 109 protein 1 from Bacteroides fragilis (strain ATCC 25285 / DSM 2151 / CCUG 4856 / JCM 11019 / LMG 10263 / NCTC 9343 / Onslow / VPI 2553 / EN-2).